The primary structure comprises 967 residues: Translation initiation factor IF-2 (967 aa).

Disordered regions lie at residues Lys-201–Val-320 and Leu-349–Ala-382. Residues Thr-233 to Asn-248 are compositionally biased toward polar residues. Positions Pro-256 to Asn-272 are enriched in low complexity. The span at Asn-354 to Arg-363 shows a compositional bias: basic residues. Residues Asp-364–Ala-382 show a composition bias toward basic and acidic residues. A tr-type G domain is found at His-465–Lys-635. The G1 stretch occupies residues Gly-474 to Thr-481. Gly-474 to Thr-481 provides a ligand contact to GTP. Positions Gly-499–His-503 are G2. Residues Asp-521–Gly-524 are G3. GTP-binding positions include Asp-521–His-525 and Asn-575–Asp-578. Positions Asn-575–Asp-578 are G4. Positions Ser-611–Lys-613 are G5.

The protein belongs to the TRAFAC class translation factor GTPase superfamily. Classic translation factor GTPase family. IF-2 subfamily.

It localises to the cytoplasm. Functionally, one of the essential components for the initiation of protein synthesis. Protects formylmethionyl-tRNA from spontaneous hydrolysis and promotes its binding to the 30S ribosomal subunits. Also involved in the hydrolysis of GTP during the formation of the 70S ribosomal complex. This Flavobacterium psychrophilum (strain ATCC 49511 / DSM 21280 / CIP 103535 / JIP02/86) protein is Translation initiation factor IF-2.